A 240-amino-acid chain; its full sequence is Ribonuclease PH (240 aa).

Residues Arg-87 and Gly-125–Arg-127 each bind phosphate.

It belongs to the RNase PH family. As to quaternary structure, homohexameric ring arranged as a trimer of dimers.

It carries out the reaction tRNA(n+1) + phosphate = tRNA(n) + a ribonucleoside 5'-diphosphate. Functionally, phosphorolytic 3'-5' exoribonuclease that plays an important role in tRNA 3'-end maturation. Removes nucleotide residues following the 3'-CCA terminus of tRNAs; can also add nucleotides to the ends of RNA molecules by using nucleoside diphosphates as substrates, but this may not be physiologically important. Probably plays a role in initiation of 16S rRNA degradation (leading to ribosome degradation) during starvation. In Pseudomonas putida (strain ATCC 47054 / DSM 6125 / CFBP 8728 / NCIMB 11950 / KT2440), this protein is Ribonuclease PH.